Reading from the N-terminus, the 948-residue chain is Putative helicase 009L (948 aa).

In terms of domain architecture, Helicase ATP-binding spans 64–243 (LSEDTPYREL…ADVLNLILPQ (180 aa)). 77-84 (HAPGTGKT) contributes to the ATP binding site. A DEAH box motif is present at residues 187 to 190 (DEVH). Residues 371–554 (VKYDYLVRVA…AVERILMTSA (184 aa)) enclose the Helicase C-terminal domain.

The protein is Putative helicase 009L of Frog virus 3 (isolate Goorha) (FV-3).